The chain runs to 188 residues: Phosphoribosylglycinamide formyltransferase (188 aa).

12–14 (GSN) contacts N(1)-(5-phospho-beta-D-ribosyl)glycinamide. (6R)-10-formyltetrahydrofolate contacts are provided by residues Lys66, 91–94 (MRLV), and Asn108. His110 functions as the Proton donor in the catalytic mechanism.

The protein belongs to the GART family.

It carries out the reaction N(1)-(5-phospho-beta-D-ribosyl)glycinamide + (6R)-10-formyltetrahydrofolate = N(2)-formyl-N(1)-(5-phospho-beta-D-ribosyl)glycinamide + (6S)-5,6,7,8-tetrahydrofolate + H(+). The protein operates within purine metabolism; IMP biosynthesis via de novo pathway; N(2)-formyl-N(1)-(5-phospho-D-ribosyl)glycinamide from N(1)-(5-phospho-D-ribosyl)glycinamide (10-formyl THF route): step 1/1. Functionally, catalyzes the transfer of a formyl group from 10-formyltetrahydrofolate to 5-phospho-ribosyl-glycinamide (GAR), producing 5-phospho-ribosyl-N-formylglycinamide (FGAR) and tetrahydrofolate. The chain is Phosphoribosylglycinamide formyltransferase from Staphylococcus epidermidis (strain ATCC 35984 / DSM 28319 / BCRC 17069 / CCUG 31568 / BM 3577 / RP62A).